A 280-amino-acid chain; its full sequence is Formamidopyrimidine-DNA glycosylase (280 aa).

The Schiff-base intermediate with DNA role is filled by Pro-2. Residue Glu-3 is the Proton donor of the active site. Catalysis depends on Lys-58, which acts as the Proton donor; for beta-elimination activity. The DNA site is built by His-91, Arg-110, and Arg-152. An FPG-type zinc finger spans residues 237-271 (NVYGRENLPCPQCDSAIEKVVLNQRAAYFCSNCQK). Catalysis depends on Arg-261, which acts as the Proton donor; for delta-elimination activity.

Belongs to the FPG family. As to quaternary structure, monomer. Zn(2+) serves as cofactor.

It catalyses the reaction Hydrolysis of DNA containing ring-opened 7-methylguanine residues, releasing 2,6-diamino-4-hydroxy-5-(N-methyl)formamidopyrimidine.. The enzyme catalyses 2'-deoxyribonucleotide-(2'-deoxyribose 5'-phosphate)-2'-deoxyribonucleotide-DNA = a 3'-end 2'-deoxyribonucleotide-(2,3-dehydro-2,3-deoxyribose 5'-phosphate)-DNA + a 5'-end 5'-phospho-2'-deoxyribonucleoside-DNA + H(+). Functionally, involved in base excision repair of DNA damaged by oxidation or by mutagenic agents. Acts as a DNA glycosylase that recognizes and removes damaged bases. Has a preference for oxidized purines, such as 7,8-dihydro-8-oxoguanine (8-oxoG). Has AP (apurinic/apyrimidinic) lyase activity and introduces nicks in the DNA strand. Cleaves the DNA backbone by beta-delta elimination to generate a single-strand break at the site of the removed base with both 3'- and 5'-phosphates. This Hydrogenovibrio crunogenus (strain DSM 25203 / XCL-2) (Thiomicrospira crunogena) protein is Formamidopyrimidine-DNA glycosylase.